The primary structure comprises 132 residues: Fatty acid-binding protein (132 aa).

(5Z,8Z,11Z,14Z)-eicosatetraenoate is bound by residues R107 and 127–129; that span reads RNY. (9Z)-octadecenoate-binding positions include R107 and 127–129; that span reads RNY.

Belongs to the calycin superfamily. Fatty-acid binding protein (FABP) family.

It localises to the cytoplasm. In terms of biological role, may play a role in the transport of fatty acids. Binds to various fatty acids but not retinoids. This Schistosoma japonicum (Blood fluke) protein is Fatty acid-binding protein.